The sequence spans 382 residues: V-type proton ATPase subunit C 1 (382 aa).

Threonine 2 is modified (N-acetylthreonine).

The protein belongs to the V-ATPase C subunit family. As to quaternary structure, V-ATPase is a heteromultimeric enzyme made up of two complexes: the ATP-hydrolytic V1 complex and the proton translocation V0 complex. The V1 complex consists of three catalytic AB heterodimers that form a heterohexamer, three peripheral stalks each consisting of EG heterodimers, one central rotor including subunits D and F, and the regulatory subunits C and H. The proton translocation complex V0 consists of the proton transport subunit a, a ring of proteolipid subunits c9c'', rotary subunit d, subunits e and f, and two accessory subunits.

Subunit of the V1 complex of vacuolar(H+)-ATPase (V-ATPase), a multisubunit enzyme composed of a peripheral complex (V1) that hydrolyzes ATP and a membrane integral complex (V0) that translocates protons. V-ATPase is responsible for acidifying and maintaining the pH of intracellular compartments and in some cell types, is targeted to the plasma membrane, where it is responsible for acidifying the extracellular environment. Subunit C is necessary for the assembly of the catalytic sector of the enzyme and is likely to have a specific function in its catalytic activity. The polypeptide is V-type proton ATPase subunit C 1 (atp6v1c1) (Xenopus laevis (African clawed frog)).